Here is a 486-residue protein sequence, read N- to C-terminus: Glycogen synthase (486 aa).

Lys15 lines the ADP-alpha-D-glucose pocket.

The protein belongs to the glycosyltransferase 1 family. Bacterial/plant glycogen synthase subfamily.

It catalyses the reaction [(1-&gt;4)-alpha-D-glucosyl](n) + ADP-alpha-D-glucose = [(1-&gt;4)-alpha-D-glucosyl](n+1) + ADP + H(+). The protein operates within glycan biosynthesis; glycogen biosynthesis. Synthesizes alpha-1,4-glucan chains using ADP-glucose. In Thermotoga petrophila (strain ATCC BAA-488 / DSM 13995 / JCM 10881 / RKU-1), this protein is Glycogen synthase.